The sequence spans 211 residues: Cell division protein SepF (211 aa).

Acidic residues predominate over residues 15-26 (DTDEVNEVEEEV). The interval 15-111 (DTDEVNEVEE…ETYQAQTTVQ (97 aa)) is disordered. Composition is skewed to polar residues over residues 44–57 (IPSQ…QNPA), 64–81 (ARSQ…PNRQ), and 91–111 (RESV…TTVQ).

This sequence belongs to the SepF family. Homodimer. Interacts with FtsZ.

The protein resides in the cytoplasm. Functionally, cell division protein that is part of the divisome complex and is recruited early to the Z-ring. Probably stimulates Z-ring formation, perhaps through the cross-linking of FtsZ protofilaments. Its function overlaps with FtsA. This Streptococcus uberis (strain ATCC BAA-854 / 0140J) protein is Cell division protein SepF.